The sequence spans 118 residues: Urease subunit beta (118 aa).

It belongs to the urease beta subunit family. Heterotrimer of UreA (gamma), UreB (beta) and UreC (alpha) subunits. Three heterotrimers associate to form the active enzyme.

It is found in the cytoplasm. It catalyses the reaction urea + 2 H2O + H(+) = hydrogencarbonate + 2 NH4(+). It participates in nitrogen metabolism; urea degradation; CO(2) and NH(3) from urea (urease route): step 1/1. The sequence is that of Urease subunit beta from Aliivibrio fischeri (strain MJ11) (Vibrio fischeri).